We begin with the raw amino-acid sequence, 161 residues long: Phosphopantetheine adenylyltransferase (161 aa).

Residue Ser11 participates in substrate binding. ATP-binding positions include 11-12 (SF) and His19. Substrate is bound by residues Lys43, Leu75, and Arg89. ATP contacts are provided by residues 90 to 92 (GLR), Glu100, and 125 to 131 (YSFISSS).

Belongs to the bacterial CoaD family. Homohexamer. The cofactor is Mg(2+).

Its subcellular location is the cytoplasm. The enzyme catalyses (R)-4'-phosphopantetheine + ATP + H(+) = 3'-dephospho-CoA + diphosphate. It functions in the pathway cofactor biosynthesis; coenzyme A biosynthesis; CoA from (R)-pantothenate: step 4/5. In terms of biological role, reversibly transfers an adenylyl group from ATP to 4'-phosphopantetheine, yielding dephospho-CoA (dPCoA) and pyrophosphate. The polypeptide is Phosphopantetheine adenylyltransferase (Staphylococcus saprophyticus subsp. saprophyticus (strain ATCC 15305 / DSM 20229 / NCIMB 8711 / NCTC 7292 / S-41)).